A 229-amino-acid chain; its full sequence is Large ribosomal subunit protein uL1 (229 aa).

Belongs to the universal ribosomal protein uL1 family. In terms of assembly, part of the 50S ribosomal subunit.

Binds directly to 23S rRNA. The L1 stalk is quite mobile in the ribosome, and is involved in E site tRNA release. In terms of biological role, protein L1 is also a translational repressor protein, it controls the translation of the L11 operon by binding to its mRNA. In Rhodopseudomonas palustris (strain TIE-1), this protein is Large ribosomal subunit protein uL1.